A 76-amino-acid polypeptide reads, in one-letter code: MKVLSLIFVIFSVLVLFASAKDPVCDQPKAVGRCFAAFPKFYFNSSSGQCEAFIYGGCGGNENNFSTLEECNAKCA.

The first 20 residues, Met-1 to Ala-20, serve as a signal peptide directing secretion. In terms of domain architecture, BPTI/Kunitz inhibitor spans Cys-25 to Cys-75. Intrachain disulfides connect Cys-25-Cys-75, Cys-34-Cys-58, and Cys-50-Cys-71.

As to expression, expressed in salivary glands.

It localises to the secreted. Its function is as follows. Potent anticoagulant protein that inhibits the hydrolytic activities of all serine proteases tested (trypsin, thrombin, elastase, and chymotrypsin), with the highest efficacy on thrombin. This Tabanus yao (Horsefly) protein is Tabkunin 2.